Here is a 152-residue protein sequence, read N- to C-terminus: Probable spermine N(1)-acetyltransferase (152 aa).

The N-acetyltransferase domain occupies 3 to 152 (INIKAVTDDN…NGEKVMVKEL (150 aa)). Acetyl-CoA contacts are provided by residues 82–84 (FFI), 89–95 (QGKGLGK), and 122–131 (NIHAIRLYQR). The active-site Proton donor is the Tyr129.

This sequence belongs to the acetyltransferase family.

It carries out the reaction an alkane-alpha,omega-diamine + acetyl-CoA = an N-acetylalkane-alpha,omega-diamine + CoA + H(+). It catalyses the reaction spermine + acetyl-CoA = N(1)-acetylspermine + CoA + H(+). Its pathway is amine and polyamine degradation; spermine degradation. Its function is as follows. Probably acetylates spermine to N(1)-acetylspermine. This is Probable spermine N(1)-acetyltransferase from Bacillus subtilis subsp. natto (strain BEST195).